We begin with the raw amino-acid sequence, 1681 residues long: Sodium channel protein type 7 subunit alpha (1681 aa).

The Cytoplasmic segment spans residues 1-118 (MLTSPEPKGL…RRAAIKALVH (118 aa)). An I repeat occupies 101–402 (TLSPLNSLRR…ILTMTYEKEK (302 aa)). Residues 119-138 (PLFRLLILISVLTDSILMCM) form a helical membrane-spanning segment. At 139–142 (SNLP) the chain is on the extracellular side. The helical transmembrane segment at 143-168 (EWILAIENTLLGIYAFEILVKVIARG) threads the bilayer. At 169–179 (IWAGSFSFLGD) the chain is on the cytoplasmic side. A helical transmembrane segment spans residues 180 to 197 (LWNWLDFSVTLFELITRF). At 198-201 (SPLS) the chain is on the extracellular side. The chain crosses the membrane as a helical span at residues 202–220 (SFLMLKTIRTFRILKIIPL). Residues 221–238 (NHGLQSIVMTLAQCLKKL) lie on the Cytoplasmic side of the membrane. A helical membrane pass occupies residues 239 to 260 (FGAIALALFFLAVFSLLGMGLF). At 261–339 (MGNLKHKCLR…PDNGFTSFDN (79 aa)) the chain is on the extracellular side. An intrachain disulfide couples cysteine 268 to cysteine 308. N-linked (GlcNAc...) asparagine glycosylation is found at asparagine 277, asparagine 282, asparagine 288, and asparagine 310. An intramembrane region (pore-forming) is located at residues 340–367 (FGWSLLAMFRLMTQDYPELLYHQILYAS). Position 368 (glycine 368) is a topological domain, extracellular. A helical membrane pass occupies residues 369–408 (KVYMIFFVMISFWFAFYLTSLFLGILTMTYEKEKQRACEE). Residues 409 to 506 (SGGLDPKCQQ…EFADRVITHP (98 aa)) lie on the Cytoplasmic side of the membrane. The stretch at 488-757 (CSPCWVKLNE…QLAMARIKSG (270 aa)) is one II repeat. A helical transmembrane segment spans residues 507–522 (LADLFLVICIVLNICF). At 523-531 (LALEHFPMS) the chain is on the extracellular side. Residues 532-560 (EELRSLLHVGNLVFIGIYTIEMILKIIAM) traverse the membrane as a helical segment. The Cytoplasmic portion of the chain corresponds to 561-569 (HPYGYFQIS). Residues 570–587 (WNIFDSILVVLELTEILL) traverse the membrane as a helical segment. The Extracellular segment spans residues 588-593 (ADVEGL). A helical membrane pass occupies residues 594–609 (AVLITVPLIFIKLGKY). The Cytoplasmic segment spans residues 610 to 626 (GPPFKSLMRILGSSLMA). A helical membrane pass occupies residues 627–655 (LKDLVLLLCIFVYFSAVFGMKLFGRSYKD). At 656 to 673 (CVCHIKEDCQPQRWHMSD) the chain is on the extracellular side. Intrachain disulfides connect cysteine 658–cysteine 664 and cysteine 696–cysteine 705. The segment at residues 674–700 (FLHAYMTVFRILCGEWIETLWECMEVA) is an intramembrane region (pore-forming). Glycine 701 is a topological domain (extracellular). The chain crosses the membrane as a helical span at residues 702–732 (QAWCIPFYMMVILIGNLLILYLFVTLVSSFS). At 733 to 934 (YYDATSEVNK…KTCCKIVENS (202 aa)) the chain is on the cytoplasmic side. Polar residues predominate over residues 806–834 (YKDQSSSTEKTPVTESESQSLIASPSASE). A disordered region spans residues 806 to 875 (YKDQSSSTEK…MKQSSSSECS (70 aa)). Serine 843 is modified (phosphoserine). One copy of the III repeat lies at 916-1224 (NGKIWKNIRK…KKQYRALKKL (309 aa)). A helical membrane pass occupies residues 935-953 (WFECFIGLVTLLCTGTLAL). The Extracellular portion of the chain corresponds to 954–961 (EDIYIDQR). A helical membrane pass occupies residues 962–990 (KTTKILLEYADMIFAYIFILEMLLKWVAY). Over 991 to 998 (GFKAFFSN) the chain is Cytoplasmic. A helical transmembrane segment spans residues 999 to 1020 (NWYKLDFMVVIVFCLSLIGKTR). Glutamate 1021 is a topological domain (extracellular). A helical transmembrane segment spans residues 1022–1040 (DLNPLTSIKFLRALRVLSQ). Residues 1041–1055 (FERMKVVLRALIKTT) lie on the Cytoplasmic side of the membrane. The helical transmembrane segment at 1056-1080 (LPTVSVFLVCLMIWLLFSVIGVQLF) threads the bilayer. At 1081 to 1127 (AGKFYECIDPTKGERFPVFEVMNKSQCEKLLFNESMPWENAKLNFDN) the chain is on the extracellular side. Cysteines 1087 and 1107 form a disulfide. N-linked (GlcNAc...) asparagine glycosylation is found at asparagine 1103 and asparagine 1113. Positions 1128–1154 (VGNGFLSLLQVATFNGWISIMNSAIDS) form an intramembrane region, pore-forming. Topologically, residues 1155–1167 (VGVNMQPSFEYNL) are extracellular. A helical membrane pass occupies residues 1168–1202 (YMYSYFIIFVIFGLFLPLCMLIGVIIRNFNKQKIK). Residues 1203-1250 (QGGSNIFITVKQKKQYRALKKLLYADVQKPTPRPRNKFQGFLFDLVTH) are Cytoplasmic-facing. The IV repeat unit spans residues 1233 to 1531 (TPRPRNKFQG…WNRFDPDRTQ (299 aa)). Residues 1251–1272 (RVFNVIIILLICFQATTIMIQK) form a helical membrane-spanning segment. Over 1273–1276 (DEQS) the chain is Extracellular. A helical membrane pass occupies residues 1277-1305 (PQMETAIFWMNSIFVMLFTLECILKLTAF). Residues 1306–1312 (RCHYFTS) are Cytoplasmic-facing. A helical transmembrane segment spans residues 1313–1338 (AWNVHDFMVVIFSITGLLLPLTIGQY). The Extracellular portion of the chain corresponds to 1339 to 1341 (FVP). Residues 1342-1362 (PSLVQLILLSRVIHILRPGKG) form a helical membrane-spanning segment. Topologically, residues 1363–1377 (PKVFHDLMLPLILAL) are cytoplasmic. A helical transmembrane segment spans residues 1378-1402 (PALLNISLLIFLVMFIYAIFGMYNF). At 1403–1420 (AYVKKEAGINDVSNFETF) the chain is on the extracellular side. Residues 1421-1444 (GSSMLCLFQVTTFSGWDGMLDAIF) constitute an intramembrane region (pore-forming). At 1445-1468 (NSQWSDCDPDKINPGTQVKGDCGS) the chain is on the extracellular side. An intrachain disulfide couples cysteine 1451 to cysteine 1466. Residues 1469–1504 (PSVGISYFVSYILISWLIIVNMYIVLIMEFLSIPSQ) form a helical membrane-spanning segment. The Cytoplasmic portion of the chain corresponds to 1505–1681 (KKSRTLSEDD…EEKASIQTQI (177 aa)). Residues 1647–1662 (NVSDTPAIDDRRDDLT) are compositionally biased toward basic and acidic residues. The segment at 1647–1681 (NVSDTPAIDDRRDDLTSKGAHSGKIEEKASIQTQI) is disordered.

The protein belongs to the sodium channel (TC 1.A.1.10) family. SCN7A subfamily. In terms of assembly, the sodium channel formed by SCN7A is probably a heterooligomeric complex consisting of the ion conducting pore forming alpha subunit SCN7A and regulatory beta subunits such as SCN3B. Interacts with ATP1A1; activates ATP1A1 and thereby indirectly signals to nearby neurons to regulate sodium homeostasis. In terms of tissue distribution, not tissue specific but widely expressed. Expressed in regions of the central nervous system that control body fluid ionic balance.

Its subcellular location is the cell membrane. The enzyme catalyses Na(+)(in) = Na(+)(out). Functionally, sodium leak channel functioning as an osmosensor regulating sodium ion levels in various tissues and organs. While most sodium channels are voltage-gated, SCN7A is not and lets sodium flow through membrane along its concentration gradient. In glial cells of the central nervous system, senses body-fluid sodium levels and controls salt intake behavior as well as voluntary water intake through activation of nearby neurons to maintain appropriate sodium levels in the body. By mediating sodium influx into keratinocytes, also plays a role in skin barrier homeostasis. The protein is Sodium channel protein type 7 subunit alpha of Mus musculus (Mouse).